Consider the following 250-residue polypeptide: Exotoxin type A (250 aa).

An N-terminal signal peptide occupies residues 1–30 (MENNKEVLKKMVFFVLMKFLGLTILPKGIC). A disulfide bridge connects residues Cys-117 and Cys-128.

This sequence belongs to the staphylococcal/streptococcal toxin family.

Its function is as follows. Causative agent of the symptoms associated with scarlet fever, have been associated with streptococcal toxic shock-like disease and may play a role in the early events of rheumatic fever. This is Exotoxin type A (speA) from Streptococcus pyogenes.